Consider the following 262-residue polypeptide: Transcription factor Adf-1 (262 aa).

The MADF DNA-binding region spans Asn-24–Arg-104. Residues Ser-217–Leu-256 enclose the BESS domain.

O-glycosylated; contains N-acetylglucosamine side chains.

The protein resides in the nucleus. May play an important role not only in the regulation of Adh expression but also in the transcription of other genes. The polypeptide is Transcription factor Adf-1 (Adf1) (Drosophila melanogaster (Fruit fly)).